The following is a 64-amino-acid chain: Photosystem II reaction center protein J (64 aa).

The helical transmembrane segment at 35–55 threads the bilayer; it reads LWLVATAGGIAVIFVLGIFFY.

It belongs to the PsbJ family. PSII is composed of 1 copy each of membrane proteins PsbA, PsbB, PsbC, PsbD, PsbE, PsbF, PsbH, PsbI, PsbJ, PsbK, PsbL, PsbM, PsbT, PsbX, PsbY, Psb30/Ycf12, peripheral proteins PsbO, CyanoQ (PsbQ), PsbU, PsbV and a large number of cofactors. It forms dimeric complexes.

It localises to the cellular thylakoid membrane. In terms of biological role, one of the components of the core complex of photosystem II (PSII). PSII is a light-driven water:plastoquinone oxidoreductase that uses light energy to abstract electrons from H(2)O, generating O(2) and a proton gradient subsequently used for ATP formation. It consists of a core antenna complex that captures photons, and an electron transfer chain that converts photonic excitation into a charge separation. This chain is Photosystem II reaction center protein J, found in Prochlorococcus marinus (strain MIT 9515).